We begin with the raw amino-acid sequence, 1416 residues long: Tiny macrocysts protein B (1416 aa).

Helical transmembrane passes span 47–67 (ILTI…GFKH), 93–113 (FGYL…ILGF), 140–160 (FVSF…LIGL), 185–205 (ANLP…IVAF), 231–251 (VTVL…DFVP), 253–273 (LTSI…IIVL), 285–305 (SGFY…MGIN), and 315–335 (ITIV…MFYF). A compositionally biased stretch (basic and acidic residues) spans 356–372 (LKDANKKGKRNSVEKES). Disordered regions lie at residues 356–377 (LKDA…PTSK) and 662–691 (IEKS…RRGK). 2 helical membrane passes run 706 to 726 (WLMI…LVVF) and 953 to 973 (AILY…AVLF). 2 disordered regions span residues 1018–1103 (RDNL…RPLM) and 1119–1144 (NVRL…ATRT). The span at 1024–1039 (TTDDDGRDDHLGEDDN) shows a compositional bias: acidic residues. 2 stretches are compositionally biased toward low complexity: residues 1048–1062 (NNNN…NNNN) and 1083–1094 (SSSGSNVLNTSS). The segment covering 1123-1144 (QAKDEEITNGGGERKGSDATRT) has biased composition (basic and acidic residues). 3 helical membrane passes run 1179-1199 (ILAT…TFTV), 1325-1345 (WFLA…FTYF), and 1358-1378 (VLTA…VVLF).

It is found in the membrane. In terms of biological role, regulator of the cAMP signaling pathway specific to sexual development. Controls the levels of external cAMP by regulating the expression of phosphodiesterase pdsA and its inhibitor pdiA. The chain is Tiny macrocysts protein B (tmcB) from Dictyostelium discoideum (Social amoeba).